A 465-amino-acid polypeptide reads, in one-letter code: Serine/threonine-protein kinase 38 (465 aa).

At Ala-2 the chain carries N-acetylalanine. Positions Lys-62–Glu-87 are interaction with S100B. At Thr-74 the chain carries Phosphothreonine. Residues Phe-89 to Phe-382 form the Protein kinase domain. Residues Ile-95 to Val-103 and Lys-118 each bind ATP. Asp-212 (proton acceptor) is an active-site residue. Position 264 is a phosphoserine (Ser-264). Position 281 is a phosphoserine; by autocatalysis (Ser-281). Positions Trp-306–Ile-311 match the UFM1-interacting motif (UFIM) motif. The 73-residue stretch at Glu-383 to Gly-455 folds into the AGC-kinase C-terminal domain. Position 444 is a phosphothreonine; by STK24/MST3 (Thr-444).

This sequence belongs to the protein kinase superfamily. AGC Ser/Thr protein kinase family. As to quaternary structure, homodimeric S100B binds two molecules of STK38. Interacts with MOB1 and MOB2. Interacts with MAP3K1 and MAP3K2 (via the kinase domain). Forms a tripartite complex with MOBKL1B and STK3/MST2. Interacts with MICAL1; leading to inhibit the protein kinase activity by antagonizing activation by MST1/STK4. The cofactor is Mg(2+). In terms of processing, ISGylated. Post-translationally, phosphorylated by STK3/MST2 and this is enhanced by MOBKL1B.

The protein localises to the nucleus. Its subcellular location is the cytoplasm. It localises to the chromosome. It carries out the reaction L-seryl-[protein] + ATP = O-phospho-L-seryl-[protein] + ADP + H(+). The enzyme catalyses L-threonyl-[protein] + ATP = O-phospho-L-threonyl-[protein] + ADP + H(+). Its activity is regulated as follows. Activated by binding of S100B which releases autoinhibitory N-lobe interactions, enabling ATP to bind and the autophosphorylation of Ser-281. Thr-444 then undergoes calcium-dependent phosphorylation by STK24/MST3. Interactions between phosphorylated Thr-444 and the N-lobe promote additional structural changes that complete the activation of the kinase. Autoinhibition is also released by the binding of MOB1/MOBKL1A and MOB2/HCCA2 to the N-terminal of STK38. Functionally, serine/threonine-protein kinase that acts as a negative regulator of MAP3K1/2 signaling. Converts MAP3K2 from its phosphorylated form to its non-phosphorylated form and inhibits autophosphorylation of MAP3K2. Acts as an ufmylation 'reader' in a kinase-independent manner: specifically recognizes and binds mono-ufmylated histone H4 in response to DNA damage, promoting the recruitment of SUV39H1 to the double-strand breaks, resulting in ATM activation. The chain is Serine/threonine-protein kinase 38 (STK38) from Bos taurus (Bovine).